Reading from the N-terminus, the 204-residue chain is Pro-glucagon (204 aa).

The signal sequence occupies residues 1–20 (MTSMYFVAGLLLMIVQGSWQ). Residues 84 to 109 (SGQQGVEEREKENLLDQLSSNGLARH) constitute a propeptide that is removed on maturation. Arg145 is subject to Arginine amide. 2 consecutive propeptides follow at residues 149–161 (DFLE…DDIG) and 197–204 (RDLLGEYQ).

The protein belongs to the glucagon family. In terms of tissue distribution, isoform LPII is expressed in both pancreas and intestine. Expression of isoform LPI is restricted to the pancreas. Neither isoform is detected in salivary glands.

The protein resides in the secreted. Its function is as follows. Plays a key role in glucose metabolism and homeostasis. Regulates blood glucose by increasing gluconeogenesis and decreasing glycolysis. Functionally, potent stimulator of glucose-dependent insulin release. Plays important roles on gastric motility and the suppression of plasma glucagon levels. In terms of biological role, stimulates intestinal growth and up-regulates villus height in the small intestine, concomitant with increased crypt cell proliferation and decreased enterocyte apoptosis. In Heloderma suspectum (Gila monster), this protein is Pro-glucagon (GCG).